The following is a 418-amino-acid chain: Light-independent protochlorophyllide reductase subunit N (418 aa).

3 residues coordinate [4Fe-4S] cluster: Cys17, Cys42, and Cys103.

It belongs to the BchN/ChlN family. In terms of assembly, protochlorophyllide reductase is composed of three subunits; ChlL, ChlN and ChlB. Forms a heterotetramer of two ChlB and two ChlN subunits. It depends on [4Fe-4S] cluster as a cofactor.

The enzyme catalyses chlorophyllide a + oxidized 2[4Fe-4S]-[ferredoxin] + 2 ADP + 2 phosphate = protochlorophyllide a + reduced 2[4Fe-4S]-[ferredoxin] + 2 ATP + 2 H2O. It participates in porphyrin-containing compound metabolism; chlorophyll biosynthesis (light-independent). Functionally, component of the dark-operative protochlorophyllide reductase (DPOR) that uses Mg-ATP and reduced ferredoxin to reduce ring D of protochlorophyllide (Pchlide) to form chlorophyllide a (Chlide). This reaction is light-independent. The NB-protein (ChlN-ChlB) is the catalytic component of the complex. This is Light-independent protochlorophyllide reductase subunit N from Prochlorococcus marinus (strain MIT 9211).